The sequence spans 187 residues: Elongation factor P (187 aa).

It belongs to the elongation factor P family.

It is found in the cytoplasm. It functions in the pathway protein biosynthesis; polypeptide chain elongation. Its function is as follows. Involved in peptide bond synthesis. Stimulates efficient translation and peptide-bond synthesis on native or reconstituted 70S ribosomes in vitro. Probably functions indirectly by altering the affinity of the ribosome for aminoacyl-tRNA, thus increasing their reactivity as acceptors for peptidyl transferase. The polypeptide is Elongation factor P (Roseiflexus castenholzii (strain DSM 13941 / HLO8)).